Reading from the N-terminus, the 517-residue chain is Ribosome assembly protein 4 (517 aa).

The disordered stretch occupies residues 1 to 25 (MATLAPPPSKRQRREEIQRTQTQQD). Positions 34 to 128 (LGSFKANFID…TITLSAEPQA (95 aa)) are ubiquitin-like (UBL) domain. 8 WD repeats span residues 144-184 (GHGQ…PKFT), 187-226 (GHTG…QVNQ), 230-277 (GHAK…HVLS), 278-316 (GHKG…LVHN), 351-397 (EERR…SKPV), 402-441 (GHQN…FIKN), 444-483 (GHVA…LAMD), and 486-517 (GHED…TWRN).

The protein belongs to the NLE1/RSA4 family. In terms of assembly, associates with the pre-60S ribosomal particle. Interacts (via WD repeats) with uL18. Interacts (via UBL domain) with MDN1 (via VWFA/MIDAS domain). Interacts (via WD repeats) with NSA2.

It is found in the nucleus. The protein localises to the nucleolus. In terms of biological role, involved in ribosome biogenesis. Required for processing and efficient intra-nuclear transport of pre-60S ribosomal subunits. Interacts with the AAA-ATPase Midasin, which is essential for the ATP-dependent dissociation of a group of nonribosomal factors from the pre-60S particle. The protein is Ribosome assembly protein 4 of Chaetomium thermophilum (strain DSM 1495 / CBS 144.50 / IMI 039719) (Thermochaetoides thermophila).